A 183-amino-acid polypeptide reads, in one-letter code: Akirin-1B (183 aa).

Residues 14–43 (EALMSPQSPKRRRCAPLPGSPATPSPQRCG) are disordered. Residues 180–183 (SYVS) carry the SYVS motif motif.

It belongs to the akirin family.

The protein resides in the nucleus. Its function is as follows. Molecular adapter that acts as a bridge between proteins, and which is involved skeletal muscle development. Functions as a signal transducer for MSTN during skeletal muscle regeneration and myogenesis. In Xenopus laevis (African clawed frog), this protein is Akirin-1B (akirin1-b).